Reading from the N-terminus, the 231-residue chain is 5'-methylthioadenosine/S-adenosylhomocysteine nucleosidase (231 aa).

The active-site Proton acceptor is the Glu12. Residues Gly78, Met153, and 174-175 (ME) each bind substrate. Asp198 acts as the Proton donor in catalysis.

This sequence belongs to the PNP/UDP phosphorylase family. MtnN subfamily.

It carries out the reaction S-adenosyl-L-homocysteine + H2O = S-(5-deoxy-D-ribos-5-yl)-L-homocysteine + adenine. The enzyme catalyses S-methyl-5'-thioadenosine + H2O = 5-(methylsulfanyl)-D-ribose + adenine. It catalyses the reaction 5'-deoxyadenosine + H2O = 5-deoxy-D-ribose + adenine. The protein operates within amino-acid biosynthesis; L-methionine biosynthesis via salvage pathway; S-methyl-5-thio-alpha-D-ribose 1-phosphate from S-methyl-5'-thioadenosine (hydrolase route): step 1/2. Catalyzes the irreversible cleavage of the glycosidic bond in both 5'-methylthioadenosine (MTA) and S-adenosylhomocysteine (SAH/AdoHcy) to adenine and the corresponding thioribose, 5'-methylthioribose and S-ribosylhomocysteine, respectively. Also cleaves 5'-deoxyadenosine, a toxic by-product of radical S-adenosylmethionine (SAM) enzymes, into 5-deoxyribose and adenine. The sequence is that of 5'-methylthioadenosine/S-adenosylhomocysteine nucleosidase from Bacillus pumilus (strain SAFR-032).